Consider the following 424-residue polypeptide: Adenylosuccinate synthetase (424 aa).

GTP-binding positions include 12–18 (GDEGKGK) and 40–42 (GHT). The active-site Proton acceptor is the aspartate 13. 2 residues coordinate Mg(2+): aspartate 13 and glycine 40. IMP contacts are provided by residues 13–16 (DEGK), 38–41 (NAGH), threonine 130, arginine 144, asparagine 220, threonine 235, and arginine 299. The Proton donor role is filled by histidine 41. 295–301 (VTTGRRR) provides a ligand contact to substrate. Residues arginine 301, 327 to 329 (KLD), and 412 to 414 (GTG) each bind GTP.

This sequence belongs to the adenylosuccinate synthetase family. As to quaternary structure, homodimer. It depends on Mg(2+) as a cofactor.

Its subcellular location is the cytoplasm. It catalyses the reaction IMP + L-aspartate + GTP = N(6)-(1,2-dicarboxyethyl)-AMP + GDP + phosphate + 2 H(+). The protein operates within purine metabolism; AMP biosynthesis via de novo pathway; AMP from IMP: step 1/2. In terms of biological role, plays an important role in the de novo pathway and in the salvage pathway of purine nucleotide biosynthesis. Catalyzes the first committed step in the biosynthesis of AMP from IMP. This chain is Adenylosuccinate synthetase, found in Aspergillus flavus (strain ATCC 200026 / FGSC A1120 / IAM 13836 / NRRL 3357 / JCM 12722 / SRRC 167).